The following is a 703-amino-acid chain: Cyclic AMP-dependent transcription factor ATF-6 beta (703 aa).

A2 bears the N-acetylalanine mark. The transcription activation stretch occupies residues 2 to 86 (AELMLLSEIA…ELLPIFPDLQ (85 aa)). The Cytoplasmic portion of the chain corresponds to 2-396 (AELMLLSEIA…ELKLGSGNRK (395 aa)). Disordered stretches follow at residues 87-114 (VKSE…PSSE), 229-248 (LDGS…QPKP), and 293-317 (EGPA…GNSC). The segment covering 89–114 (SEPSSPCSSSSLSSESSRLSTEPSSE) has biased composition (low complexity). Positions 325 to 388 (LLKRQQRMIK…EALLAENSEL (64 aa)) constitute a bZIP domain. Residues 327–347 (KRQQRMIKNRESACQSRRKKK) form a basic motif region. The segment at 350–357 (LQGLEARL) is leucine-zipper. The helical; Signal-anchor for type II membrane protein transmembrane segment at 397–417 (VVCIMVFLLFIAFNFGPVSIS) threads the bilayer. Residues 418–703 (EPPSAPISPR…SHQPLYLNHP (286 aa)) are Lumenal-facing. The segment at 447–479 (PVQGVEPLQGSSQGPKEPQPSPTDQPSFSNLTA) is disordered. N-linked (GlcNAc...) asparagine glycans are attached at residues N476 and N505. Residues 521–565 (QRHQRGRRKIPQRAQERQKSQPRKKSPPVKAVPIQPPGPPERDSV) form a disordered region. Positions 522-531 (RHQRGRRKIP) are enriched in basic residues. N610, N627, and N676 each carry an N-linked (GlcNAc...) asparagine glycan. The segment covering 660–676 (STVPPSLRKQPSPTPGN) has biased composition (polar residues). Positions 660 to 703 (STVPPSLRKQPSPTPGNATGGPLPVSAASQAHQASHQPLYLNHP) are disordered. Positions 685–696 (SAASQAHQASHQ) are enriched in low complexity.

It belongs to the bZIP family. ATF subfamily. Homodimer and heterodimer with ATF6-alpha. The dimer interacts with the nuclear transcription factor Y (NF-Y) trimer through direct binding to NF-Y subunit C (NF-YC). Post-translationally, N-glycosylated. In terms of processing, during unfolded protein response, a fragment of approximately 60 kDa containing the cytoplasmic transcription factor domain is released by proteolysis. The cleavage is probably performed sequentially by site-1 (MBTPS1, S1P) and site-2 (MBTPS2, S2P) proteases. Ubiquitous.

It localises to the endoplasmic reticulum membrane. Its subcellular location is the nucleus. Its function is as follows. Precursor of the transcription factor form (Processed cyclic AMP-dependent transcription factor ATF-6 beta), which is embedded in the endoplasmic reticulum membrane. Endoplasmic reticulum stress promotes processing of this form, releasing the transcription factor form that translocates into the nucleus, where it activates transcription of genes involved in the unfolded protein response (UPR). Functionally, transcription factor that acts in the unfolded protein response (UPR) pathway by activating UPR target genes induced during ER stress. Binds DNA on the 5'-CCAC[GA]-3' half of the ER stress response element (ERSE) (5'-CCAATN(9)CCAC[GA]-3') when NF-Y is bound to ERSE. In Homo sapiens (Human), this protein is Cyclic AMP-dependent transcription factor ATF-6 beta (ATF6B).